The primary structure comprises 443 residues: L-seryl-tRNA(Sec) selenium transferase (443 aa).

The residue at position 285 (K285) is an N6-(pyridoxal phosphate)lysine.

It belongs to the SelA family. Requires pyridoxal 5'-phosphate as cofactor.

It is found in the cytoplasm. It carries out the reaction L-seryl-tRNA(Sec) + selenophosphate + H(+) = L-selenocysteinyl-tRNA(Sec) + phosphate. It participates in aminoacyl-tRNA biosynthesis; selenocysteinyl-tRNA(Sec) biosynthesis; selenocysteinyl-tRNA(Sec) from L-seryl-tRNA(Sec) (bacterial route): step 1/1. In terms of biological role, converts seryl-tRNA(Sec) to selenocysteinyl-tRNA(Sec) required for selenoprotein biosynthesis. This is L-seryl-tRNA(Sec) selenium transferase from Campylobacter lari (strain RM2100 / D67 / ATCC BAA-1060).